Consider the following 217-residue polypeptide: UPF0319 protein HS_1349 (217 aa).

Residues 1-21 (MKFSFAALASAMLLTSTAAFA) form the signal peptide.

The protein belongs to the UPF0319 family.

The polypeptide is UPF0319 protein HS_1349 (Histophilus somni (strain 129Pt) (Haemophilus somnus)).